Consider the following 342-residue polypeptide: Putative ABC transporter anion-binding protein HVO_1888 (342 aa).

A signal peptide (tat-type signal) is located at residues 1–32; sequence MAIERRRFLQAAGVGAVLGLSGCTGNTSPPQA. A compositionally biased stretch (polar residues) spans 24–37; that stretch reads TGNTSPPQANNETA. Positions 24-52 are disordered; it reads TGNTSPPQANNETAEGSGGSESGDGSTQE.

The complex is composed of two ATP-binding proteins (HVO_1886), two transmembrane proteins (HVO_1887) and a solute-binding protein (HVO_1888). Predicted to be exported by the Tat system. The position of the signal peptide cleavage has not been experimentally proven.

In terms of biological role, part of an ABC transporter complex involved in anions import. The sequence is that of Putative ABC transporter anion-binding protein HVO_1888 from Haloferax volcanii (strain ATCC 29605 / DSM 3757 / JCM 8879 / NBRC 14742 / NCIMB 2012 / VKM B-1768 / DS2) (Halobacterium volcanii).